Reading from the N-terminus, the 1304-residue chain is Zinc finger CCCH domain-containing protein 4 (1304 aa).

Positions 1–33 (MEAVPGTPPPPPSESPPPPSPPPPSTPSPPPCS) are enriched in pro residues. The tract at residues 1–387 (MEAVPGTPPP…SDHDKPHQQS (387 aa)) is disordered. Acidic residues predominate over residues 53 to 73 (DREDGELEEGELEDDGAEEVQ). The segment covering 80–99 (ERSRKEKGEKHHSDSEEEKS) has biased composition (basic and acidic residues). Residues Ser92 and Ser94 each carry the phosphoserine modification. The stretch at 94–128 (SEEEKSHRRLKRKRKKEREKEKRRSKKRRKSKHKR) forms a coiled coil. A compositionally biased stretch (basic residues) spans 100–130 (HRRLKRKRKKEREKEKRRSKKRRKSKHKRHA). The segment covering 135-144 (DFSDFSDDSD) has biased composition (acidic residues). A Phosphotyrosine modification is found at Tyr155. Positions 165-174 (SHQQYSSSHN) are enriched in polar residues. The span at 194–218 (EDYENEQYGEYEGDEEEDMGKEDYD) shows a compositional bias: acidic residues. Basic and acidic residues predominate over residues 219-235 (DFTKELNQYRRAKEGSS). The span at 238–251 (RGSRGRGRGYRGRG) shows a compositional bias: basic residues. A compositionally biased stretch (gly residues) spans 252–264 (SRGGSRGRGMGRG). Residues 277-303 (PEDEEDLYEEEIEYGESEEPMGDDDYD) show a composition bias toward acidic residues. Residues 304–320 (DYSKELNQYRRSKDSRG) are compositionally biased toward basic and acidic residues. A compositionally biased stretch (basic residues) spans 322 to 346 (GLSRGRGRGSRGGRGKGMGRGRGRG). The segment covering 357 to 368 (NDDEDFYDDDMG) has biased composition (acidic residues). Residues 376–387 (RRSDHDKPHQQS) show a composition bias toward basic and acidic residues. 3 C3H1-type zinc fingers span residues 389–416 (KKGK…HDIE), 418–445 (PKKR…HGDF), and 446–469 (PCKL…HDPL). The span at 485-495 (AEAGAEDEKEV) shows a compositional bias: acidic residues. The disordered stretch occupies residues 485–567 (AEAGAEDEKE…LPTHEPLSPQ (83 aa)). Pro residues-rich tracts occupy residues 506–529 (LPKP…PAPT) and 538–556 (GGPP…PPQM). Arg599 carries the post-translational modification Asymmetric dimethylarginine. Disordered stretches follow at residues 601–691 (PGPG…DSPH), 719–970 (PGLV…SHIK), and 994–1304 (LPIP…PFCQ). The span at 603 to 622 (PGGPSGPMGPGPNMGPPGPM) shows a compositional bias: pro residues. Residues 628–660 (PDMHPDMHPDMHPDMHPDMHPDMHPDMHPDMHP) show a composition bias toward basic and acidic residues. A compositionally biased stretch (pro residues) spans 669–683 (NPGPPMGPGGPPMMP). Positions 778 to 809 (ALYLRIQQKQQEEERARRLAESSKQDRENEEG) form a coiled coil. Positions 787 to 804 (QQEEERARRLAESSKQDR) are enriched in basic and acidic residues. Phosphoserine is present on residues Ser816 and Ser817. The segment covering 824–852 (SSVTSILKTLRQQTSSRPQASVGEPSSSG) has biased composition (polar residues). Over residues 869-884 (SDPRLSRDPRLSRHAE) the composition is skewed to basic and acidic residues. Residues Ser913, Ser916, and Ser917 each carry the phosphoserine modification. Residues 913-929 (SLHSSPAGPSSSKGQPP) are compositionally biased toward low complexity. The segment covering 994–1005 (LPIPKQDVPPVP) has biased composition (pro residues). Composition is skewed to polar residues over residues 1028-1044 (NTRQ…SGSN) and 1058-1067 (VNVNTPGQSE). Basic and acidic residues predominate over residues 1068–1085 (KPSDPRVRKTPTDPRLQK). 2 stretches are compositionally biased toward low complexity: residues 1098–1129 (PCPT…VLAA) and 1137–1146 (SSGQSSVLSG). Phosphoserine is present on residues Ser1104, Ser1109, Ser1111, and Ser1115. Thr1119 carries the phosphothreonine modification. Polar residues predominate over residues 1204–1220 (KASTDGATATDRYNSYN). The segment covering 1225-1235 (KATAAPTAASS) has biased composition (low complexity). 2 positions are modified to phosphoserine: Ser1270 and Ser1276.

Belongs to the suppressor of sable family. In terms of assembly, interacts with WDR82.

It localises to the chromosome. RNA-binding protein that suppresses transcription of long non-coding RNAs (lncRNAs). LncRNAs are defined as transcripts more than 200 nucleotides that are not translated into protein. Together with WDR82, part of a transcription termination checkpoint that promotes transcription termination of lncRNAs and their subsequent degradation by the exosome. The transcription termination checkpoint is activated by the inefficiently spliced first exon of lncRNAs. The chain is Zinc finger CCCH domain-containing protein 4 from Mus musculus (Mouse).